The sequence spans 455 residues: Glutamyl-tRNA reductase (455 aa).

Residues Thr49–Arg52, Ser109, Glu114–Gln116, and Gln120 each bind substrate. Cys50 (nucleophile) is an active-site residue. Position 189-194 (Gly189–Gly194) interacts with NADP(+).

Belongs to the glutamyl-tRNA reductase family. As to quaternary structure, homodimer.

It carries out the reaction (S)-4-amino-5-oxopentanoate + tRNA(Glu) + NADP(+) = L-glutamyl-tRNA(Glu) + NADPH + H(+). The protein operates within porphyrin-containing compound metabolism; protoporphyrin-IX biosynthesis; 5-aminolevulinate from L-glutamyl-tRNA(Glu): step 1/2. Its function is as follows. Catalyzes the NADPH-dependent reduction of glutamyl-tRNA(Glu) to glutamate 1-semialdehyde (GSA). This chain is Glutamyl-tRNA reductase, found in Bacillus velezensis (strain DSM 23117 / BGSC 10A6 / LMG 26770 / FZB42) (Bacillus amyloliquefaciens subsp. plantarum).